The chain runs to 268 residues: 3-methyl-2-oxobutanoate hydroxymethyltransferase (268 aa).

Positions 44 and 83 each coordinate Mg(2+). 3-methyl-2-oxobutanoate-binding positions include 44–45, Asp83, and Lys113; that span reads DS. Glu115 serves as a coordination point for Mg(2+). Glu182 (proton acceptor) is an active-site residue.

The protein belongs to the PanB family. Homodecamer; pentamer of dimers. It depends on Mg(2+) as a cofactor.

Its subcellular location is the cytoplasm. The catalysed reaction is 3-methyl-2-oxobutanoate + (6R)-5,10-methylene-5,6,7,8-tetrahydrofolate + H2O = 2-dehydropantoate + (6S)-5,6,7,8-tetrahydrofolate. Its pathway is cofactor biosynthesis; (R)-pantothenate biosynthesis; (R)-pantoate from 3-methyl-2-oxobutanoate: step 1/2. In terms of biological role, catalyzes the reversible reaction in which hydroxymethyl group from 5,10-methylenetetrahydrofolate is transferred onto alpha-ketoisovalerate to form ketopantoate. This chain is 3-methyl-2-oxobutanoate hydroxymethyltransferase, found in Synechococcus elongatus (strain ATCC 33912 / PCC 7942 / FACHB-805) (Anacystis nidulans R2).